A 457-amino-acid polypeptide reads, in one-letter code: tRNA-2-methylthio-N(6)-dimethylallyladenosine synthase (457 aa).

An MTTase N-terminal domain is found at 18–133 (KKLFIETYGC…LPELIASVEA (116 aa)). The [4Fe-4S] cluster site is built by Cys27, Cys63, Cys97, Cys171, Cys175, and Cys178. Positions 157–390 (CGNHISGFVS…IALQNRLSAE (234 aa)) constitute a Radical SAM core domain. One can recognise a TRAM domain in the interval 393 to 456 (NRCIGKTYEV…SATLKGEEVF (64 aa)).

This sequence belongs to the methylthiotransferase family. MiaB subfamily. In terms of assembly, monomer. It depends on [4Fe-4S] cluster as a cofactor.

The protein localises to the cytoplasm. The enzyme catalyses N(6)-dimethylallyladenosine(37) in tRNA + (sulfur carrier)-SH + AH2 + 2 S-adenosyl-L-methionine = 2-methylsulfanyl-N(6)-dimethylallyladenosine(37) in tRNA + (sulfur carrier)-H + 5'-deoxyadenosine + L-methionine + A + S-adenosyl-L-homocysteine + 2 H(+). Its function is as follows. Catalyzes the methylthiolation of N6-(dimethylallyl)adenosine (i(6)A), leading to the formation of 2-methylthio-N6-(dimethylallyl)adenosine (ms(2)i(6)A) at position 37 in tRNAs that read codons beginning with uridine. This is tRNA-2-methylthio-N(6)-dimethylallyladenosine synthase from Bacteroides fragilis (strain ATCC 25285 / DSM 2151 / CCUG 4856 / JCM 11019 / LMG 10263 / NCTC 9343 / Onslow / VPI 2553 / EN-2).